The sequence spans 352 residues: Phosphoribosylformylglycinamidine cyclo-ligase (352 aa).

The protein belongs to the AIR synthase family.

Its subcellular location is the cytoplasm. It carries out the reaction 2-formamido-N(1)-(5-O-phospho-beta-D-ribosyl)acetamidine + ATP = 5-amino-1-(5-phospho-beta-D-ribosyl)imidazole + ADP + phosphate + H(+). The protein operates within purine metabolism; IMP biosynthesis via de novo pathway; 5-amino-1-(5-phospho-D-ribosyl)imidazole from N(2)-formyl-N(1)-(5-phospho-D-ribosyl)glycinamide: step 2/2. The sequence is that of Phosphoribosylformylglycinamidine cyclo-ligase from Saccharophagus degradans (strain 2-40 / ATCC 43961 / DSM 17024).